The following is a 283-amino-acid chain: Pantothenate synthetase (283 aa).

Met-30–His-37 contacts ATP. Residue His-37 is the Proton donor of the active site. Gln-61 is a binding site for (R)-pantoate. Gln-61 contacts beta-alanine. Gly-149 to Asp-152 is an ATP binding site. (R)-pantoate is bound at residue Gln-155. ATP-binding positions include Val-178 and Leu-186–Arg-189.

Belongs to the pantothenate synthetase family. In terms of assembly, homodimer.

It is found in the cytoplasm. The enzyme catalyses (R)-pantoate + beta-alanine + ATP = (R)-pantothenate + AMP + diphosphate + H(+). Its pathway is cofactor biosynthesis; (R)-pantothenate biosynthesis; (R)-pantothenate from (R)-pantoate and beta-alanine: step 1/1. Its function is as follows. Catalyzes the condensation of pantoate with beta-alanine in an ATP-dependent reaction via a pantoyl-adenylate intermediate. This chain is Pantothenate synthetase, found in Salmonella arizonae (strain ATCC BAA-731 / CDC346-86 / RSK2980).